Reading from the N-terminus, the 764-residue chain is Molybdenum cofactor sulfurase 1 (764 aa).

Lysine 228 carries the post-translational modification N6-(pyridoxal phosphate)lysine. The active site involves cysteine 394. The region spanning 607 to 762 (LRLLKQSDEE…LYCNSVVEGL (156 aa)) is the MOSC domain.

The protein belongs to the class-V pyridoxal-phosphate-dependent aminotransferase family. MOCOS subfamily. The cofactor is pyridoxal 5'-phosphate.

The catalysed reaction is Mo-molybdopterin + L-cysteine + AH2 = thio-Mo-molybdopterin + L-alanine + A + H2O. Sulfurates the molybdenum cofactor. Sulfation of molybdenum is essential for xanthine dehydrogenase (XDH) and aldehyde oxidase (ADO) enzymes in which molybdenum cofactor is liganded by 1 oxygen and 1 sulfur atom in active form. This is Molybdenum cofactor sulfurase 1 from Aedes aegypti (Yellowfever mosquito).